A 287-amino-acid polypeptide reads, in one-letter code: Protein HEXIM2 (287 aa).

2 disordered regions span residues 1–212 and 266–287; these read MKDW…RSKE and RLRQ…QPGS. At Ser-31 the chain carries Phosphoserine. Phosphothreonine occurs at positions 34 and 48. Ser-53, Ser-55, Ser-73, Ser-78, and Ser-83 each carry phosphoserine. A compositionally biased stretch (basic residues) spans 89 to 105; the sequence is ARKKHRRRPSKRKRHWR. Residues 115–134 show a composition bias toward basic and acidic residues; the sequence is KQQRDERQSQRASRVREEMF. An interaction with P-TEFb region spans residues 142-145; the sequence is PYNT. Basic and acidic residues-rich tracts occupy residues 181-212 and 266-280; these read GQGR…RSKE and RLRQ…EGGR. Positions 208 to 278 form a coiled coil; sequence GRSKEELVRD…QENEMWNREG (71 aa). Residues 227 to 287 are interaction with CCNT1, HEXIM1 and HEXIM2; that stretch reads QAEEEMRRLR…GGRRGGQPGS (61 aa).

It belongs to the HEXIM family. In terms of assembly, homooligomer and heterooligomer with HEXIM1; probably dimeric. Core component of the 7SK RNP complex, at least composed of 7SK RNA, LARP7, MEPCE, HEXIM1 (or HEXIM2) and P-TEFb (composed of CDK9 and CCNT1/cyclin-T1). Interacts with CCNT2.

The protein localises to the nucleus. Transcriptional regulator which functions as a general RNA polymerase II transcription inhibitor. Core component of the 7SK RNP complex: in cooperation with 7SK snRNA sequesters P-TEFb in a large inactive 7SK snRNP complex preventing RNA polymerase II phosphorylation and subsequent transcriptional elongation. In Bos taurus (Bovine), this protein is Protein HEXIM2 (HEXIM2).